A 287-amino-acid polypeptide reads, in one-letter code: RNA polymerase sigma factor RpoH (287 aa).

The interval 54 to 123 is sigma-70 factor domain-2; the sequence is LILSHLRFVI…IHEYVLRNWR (70 aa). Residues 78–81 carry the Interaction with polymerase core subunit RpoC motif; the sequence is DLIQ. Residues 230 to 283 are sigma-70 factor domain-4; sequence ALSSLDERSRNIIHARWLDDSDHKMTLREIAHNYGISAERVRQLEKNAMKKLKV. The segment at residues 256–275 is a DNA-binding region (H-T-H motif); sequence LREIAHNYGISAERVRQLEK.

This sequence belongs to the sigma-70 factor family. RpoH subfamily. As to quaternary structure, interacts with the RNA polymerase core enzyme.

Its subcellular location is the cytoplasm. Sigma factors are initiation factors that promote the attachment of RNA polymerase to specific initiation sites and are then released. This sigma factor is involved in regulation of expression of heat shock genes. In Buchnera aphidicola subsp. Baizongia pistaciae (strain Bp), this protein is RNA polymerase sigma factor RpoH.